A 520-amino-acid chain; its full sequence is 2-isopropylmalate synthase (520 aa).

Residues 4–266 (VEFLDTTLRD…TSDIVLNETV (263 aa)) form the Pyruvate carboxyltransferase domain. Mn(2+) is bound by residues Asp13, His201, His203, and Asn237. Residues 390–520 (HFGDLKLTSN…AVSFRDVPTN (131 aa)) are regulatory domain.

It belongs to the alpha-IPM synthase/homocitrate synthase family. LeuA type 1 subfamily. In terms of assembly, homodimer. Mn(2+) is required as a cofactor.

The protein resides in the cytoplasm. The enzyme catalyses 3-methyl-2-oxobutanoate + acetyl-CoA + H2O = (2S)-2-isopropylmalate + CoA + H(+). It functions in the pathway amino-acid biosynthesis; L-leucine biosynthesis; L-leucine from 3-methyl-2-oxobutanoate: step 1/4. Its function is as follows. Catalyzes the condensation of the acetyl group of acetyl-CoA with 3-methyl-2-oxobutanoate (2-ketoisovalerate) to form 3-carboxy-3-hydroxy-4-methylpentanoate (2-isopropylmalate). This Streptococcus gallolyticus (strain UCN34) protein is 2-isopropylmalate synthase.